The following is a 134-amino-acid chain: Profilin-3 (134 aa).

Residues Cys13 and Cys118 are joined by a disulfide bond. An Involved in PIP2 interaction motif is present at residues Ala84–Thr100. Phosphothreonine is present on Thr114.

Belongs to the profilin family. In terms of assembly, occurs in many kinds of cells as a complex with monomeric actin in a 1:1 ratio. In terms of processing, phosphorylated by MAP kinases.

It localises to the cytoplasm. It is found in the cytoskeleton. Its function is as follows. Binds to actin and affects the structure of the cytoskeleton. At high concentrations, profilin prevents the polymerization of actin, whereas it enhances it at low concentrations. This Olea europaea (Common olive) protein is Profilin-3.